The chain runs to 78 residues: Acyl carrier protein (78 aa).

The region spanning 1–76 (MALFEDIQAV…DVVKYIEDNK (76 aa)) is the Carrier domain. Serine 36 is subject to O-(pantetheine 4'-phosphoryl)serine.

Belongs to the acyl carrier protein (ACP) family. In terms of processing, 4'-phosphopantetheine is transferred from CoA to a specific serine of apo-ACP by AcpS. This modification is essential for activity because fatty acids are bound in thioester linkage to the sulfhydryl of the prosthetic group.

It localises to the cytoplasm. Its pathway is lipid metabolism; fatty acid biosynthesis. Functionally, carrier of the growing fatty acid chain in fatty acid biosynthesis. This Helicobacter acinonychis (strain Sheeba) protein is Acyl carrier protein.